We begin with the raw amino-acid sequence, 399 residues long: Acetylornithine aminotransferase (399 aa).

Residues 102 to 103 and phenylalanine 138 each bind pyridoxal 5'-phosphate; that span reads GA. Arginine 141 contacts N(2)-acetyl-L-ornithine. 223–226 contributes to the pyridoxal 5'-phosphate binding site; sequence DEVQ. Lysine 252 is modified (N6-(pyridoxal phosphate)lysine). Threonine 280 provides a ligand contact to pyridoxal 5'-phosphate.

This sequence belongs to the class-III pyridoxal-phosphate-dependent aminotransferase family. ArgD subfamily. Homodimer. Pyridoxal 5'-phosphate serves as cofactor.

It is found in the cytoplasm. The catalysed reaction is N(2)-acetyl-L-ornithine + 2-oxoglutarate = N-acetyl-L-glutamate 5-semialdehyde + L-glutamate. Its pathway is amino-acid biosynthesis; L-arginine biosynthesis; N(2)-acetyl-L-ornithine from L-glutamate: step 4/4. This is Acetylornithine aminotransferase from Ralstonia nicotianae (strain ATCC BAA-1114 / GMI1000) (Ralstonia solanacearum).